Reading from the N-terminus, the 404-residue chain is Tyrosine--tRNA ligase (404 aa).

Positions 45–54 (PTAPDLHLGH) match the 'HIGH' region motif. Residues 229–233 (KMSKS) carry the 'KMSKS' region motif. Lys232 contacts ATP. One can recognise an S4 RNA-binding domain in the interval 342–402 (IFIASIVRLA…GKKAIAQVTF (61 aa)).

Belongs to the class-I aminoacyl-tRNA synthetase family. TyrS type 2 subfamily. In terms of assembly, homodimer.

The protein resides in the cytoplasm. It catalyses the reaction tRNA(Tyr) + L-tyrosine + ATP = L-tyrosyl-tRNA(Tyr) + AMP + diphosphate + H(+). Functionally, catalyzes the attachment of tyrosine to tRNA(Tyr) in a two-step reaction: tyrosine is first activated by ATP to form Tyr-AMP and then transferred to the acceptor end of tRNA(Tyr). The sequence is that of Tyrosine--tRNA ligase from Acinetobacter baylyi (strain ATCC 33305 / BD413 / ADP1).